The following is a 622-amino-acid chain: Probable potassium transport system protein Kup (622 aa).

12 helical membrane-spanning segments follow: residues L9 to L29, F52 to V72, V101 to P121, P137 to I157, F169 to F189, V213 to A233, W247 to L267, F287 to F309, I337 to F357, L363 to C383, V396 to V416, and F419 to T439.

It belongs to the HAK/KUP transporter (TC 2.A.72) family.

It is found in the cell inner membrane. It catalyses the reaction K(+)(in) + H(+)(in) = K(+)(out) + H(+)(out). In terms of biological role, transport of potassium into the cell. Likely operates as a K(+):H(+) symporter. This is Probable potassium transport system protein Kup from Tolumonas auensis (strain DSM 9187 / NBRC 110442 / TA 4).